The sequence spans 191 residues: Glutathione-dependent formaldehyde-activating enzyme (191 aa).

Positions 22-169 constitute a CENP-V/GFA domain; sequence FQGGTLECHC…LTELGLPPYD (148 aa). Positions 29, 31, 50, 52, 55, 97, and 100 each coordinate Zn(2+).

The protein belongs to the Gfa family. It depends on Zn(2+) as a cofactor.

The catalysed reaction is S-(hydroxymethyl)glutathione = glutathione + formaldehyde. Its pathway is one-carbon metabolism; formaldehyde degradation; formate from formaldehyde (glutathione route): step 1/3. Catalyzes the condensation of formaldehyde and glutathione to S-hydroxymethylglutathione. This Xanthomonas axonopodis pv. citri (strain 306) protein is Glutathione-dependent formaldehyde-activating enzyme.